A 207-amino-acid chain; its full sequence is Putative 3-methyladenine DNA glycosylase (207 aa).

It belongs to the DNA glycosylase MPG family.

The sequence is that of Putative 3-methyladenine DNA glycosylase from Listeria welshimeri serovar 6b (strain ATCC 35897 / DSM 20650 / CCUG 15529 / CIP 8149 / NCTC 11857 / SLCC 5334 / V8).